The sequence spans 296 residues: Acetylglutamate kinase (296 aa).

Substrate is bound by residues 67-68 (GG), Arg-89, and Asn-194.

The protein belongs to the acetylglutamate kinase family. ArgB subfamily.

It localises to the cytoplasm. It carries out the reaction N-acetyl-L-glutamate + ATP = N-acetyl-L-glutamyl 5-phosphate + ADP. Its pathway is amino-acid biosynthesis; L-arginine biosynthesis; N(2)-acetyl-L-ornithine from L-glutamate: step 2/4. Functionally, catalyzes the ATP-dependent phosphorylation of N-acetyl-L-glutamate. This is Acetylglutamate kinase from Brucella anthropi (strain ATCC 49188 / DSM 6882 / CCUG 24695 / JCM 21032 / LMG 3331 / NBRC 15819 / NCTC 12168 / Alc 37) (Ochrobactrum anthropi).